The sequence spans 289 residues: Phospholipase C (289 aa).

The N-terminal stretch at 1–25 (MKFKKVVLGMCLIASVLVFPVTIKA) is a signal peptide. The propeptide occupies 26 to 51 (NACCDEYLQTPAAPHDIDSKLPHKLS). Residues tryptophan 52, histidine 65, aspartate 106, histidine 120, histidine 169, aspartate 173, histidine 179, histidine 193, and glutamate 197 each coordinate Zn(2+). Positions 52-289 (WSADNPTNTD…LEFWSKKTNE (238 aa)) constitute a Zn-dependent PLC domain.

It belongs to the bacterial zinc-metallophospholipase C family. In terms of assembly, forms monomers, dimers and higher order oligomers, but only the monomer is enzymatically active. Requires Zn(2+) as cofactor.

It is found in the secreted. It carries out the reaction a 1,2-diacyl-sn-glycero-3-phosphocholine + H2O = phosphocholine + a 1,2-diacyl-sn-glycerol + H(+). The catalysed reaction is 1,2-dihexadecanoyl-sn-glycero-3-phosphocholine + H2O = 1,2-dihexadecanoyl-sn-glycerol + phosphocholine + H(+). The enzyme catalyses 1-hexadecanoyl-2-(9Z-octadecenoyl)-sn-glycero-3-phosphocholine + H2O = 1-hexadecanoyl-2-(9Z-octadecenoyl)-sn-glycerol + phosphocholine + H(+). It catalyses the reaction 1,2-di-(9Z-octadecenoyl)-sn-glycero-3-phosphocholine + H2O = 1,2-di-(9Z-octadecenoyl)-sn-glycerol + phosphocholine + H(+). It carries out the reaction a 1,2-diacyl-sn-glycero-3-phosphoethanolamine + H2O = phosphoethanolamine + a 1,2-diacyl-sn-glycerol + H(+). The catalysed reaction is 1,2-di-(9Z-octadecenoyl)-sn-glycero-3-phosphoethanolamine + H2O = phosphoethanolamine + 1,2-di-(9Z-octadecenoyl)-sn-glycerol + H(+). The enzyme catalyses 1,2-dihexadecanoyl-sn-glycero-3-phosphoethanolamine + H2O = 1,2-dihexadecanoyl-sn-glycerol + phosphoethanolamine + H(+). It catalyses the reaction a 1,2-diacyl-sn-glycero-3-phospho-L-serine + H2O = O-phospho-L-serine + a 1,2-diacyl-sn-glycerol + H(+). It carries out the reaction a 1,2-diacyl-sn-glycero-3-phosphoglycerol + H2O = glycerol 1-phosphate + a 1,2-diacyl-sn-glycerol + H(+). The catalysed reaction is a 1,2-diacyl-sn-glycero-3-phospho-(1D-myo-inositol) + H2O = 1D-myo-inositol 1-phosphate + a 1,2-diacyl-sn-glycerol + H(+). The enzyme catalyses a sphingomyelin + H2O = phosphocholine + an N-acylsphing-4-enine + H(+). It catalyses the reaction a 1-O-(1Z-alkenyl)-2-acyl-sn-glycero-3-phosphoethanolamine + H2O = a 1-O-(1Z-alkenyl)-2-acyl-sn-glycerol + phosphoethanolamine + H(+). Its activity is regulated as follows. Enzymatic activity of LmPC-PLC can be specifically inhibited by its propeptide added in trans. The tendency of the enzyme to oligomerize, which appears to largely attenuate the enzymatic activity, may be one of the mechanisms regulating phospholipase activity in the host cell during the different steps of the infection cycle of L.monocytogenes. Enzyme activity is inhibited by EDTA and o-phenanthroline in vitro. Functionally, major virulence factor whose phospholipase activity facilitates pore formation by the pore-forming toxin listeriolysin O (LLO), leading to vacuolar membrane disruption and vacuolar escape of L.monocytogenes, which enables the bacterium to spread in the host. Acts as a phospholipase C exhibiting broad substrate specificity, with the highest activities towards diacylglycerophospholipids with phosphocholine, phosphoserine, and phosphoethanolamine head groups, but less towards phosphoglycerol or phosphoinositol head groups. Is also able to hydrolyze sphingomyelin and plasmenylethanolamine. The polypeptide is Phospholipase C (Listeria monocytogenes serovar 1/2a (strain ATCC BAA-679 / EGD-e)).